We begin with the raw amino-acid sequence, 270 residues long: Purine nucleoside phosphorylase BT_4389 (270 aa).

Residues His79, Cys124, and His141 each contribute to the Zn(2+) site.

The protein belongs to the purine nucleoside phosphorylase YfiH/LACC1 family. Homodimer. It depends on Cu(2+) as a cofactor. Zn(2+) serves as cofactor.

It catalyses the reaction adenosine + phosphate = alpha-D-ribose 1-phosphate + adenine. The catalysed reaction is S-methyl-5'-thioadenosine + phosphate = 5-(methylsulfanyl)-alpha-D-ribose 1-phosphate + adenine. The enzyme catalyses inosine + phosphate = alpha-D-ribose 1-phosphate + hypoxanthine. It carries out the reaction adenosine + H2O + H(+) = inosine + NH4(+). Its function is as follows. Purine nucleoside enzyme that catalyzes the phosphorolysis of adenosine and inosine nucleosides, yielding D-ribose 1-phosphate and the respective free bases, adenine and hypoxanthine. Also catalyzes the phosphorolysis of S-methyl-5'-thioadenosine into adenine and S-methyl-5-thio-alpha-D-ribose 1-phosphate. Also has adenosine deaminase activity. The sequence is that of Purine nucleoside phosphorylase BT_4389 from Bacteroides thetaiotaomicron (strain ATCC 29148 / DSM 2079 / JCM 5827 / CCUG 10774 / NCTC 10582 / VPI-5482 / E50).